A 235-amino-acid polypeptide reads, in one-letter code: Small ribosomal subunit protein uS3 (235 aa).

In terms of domain architecture, KH type-2 spans 39–107 (IRDFIKKECH…ELHLNIVEVR (69 aa)). Positions 213–235 (AARDRKAQELQDGPAPRGAGGRR) are disordered.

This sequence belongs to the universal ribosomal protein uS3 family. As to quaternary structure, part of the 30S ribosomal subunit. Forms a tight complex with proteins S10 and S14.

Functionally, binds the lower part of the 30S subunit head. Binds mRNA in the 70S ribosome, positioning it for translation. The chain is Small ribosomal subunit protein uS3 from Roseobacter denitrificans (strain ATCC 33942 / OCh 114) (Erythrobacter sp. (strain OCh 114)).